We begin with the raw amino-acid sequence, 80 residues long: Large ribosomal subunit protein bL31B (80 aa).

It belongs to the bacterial ribosomal protein bL31 family. Type B subfamily. Part of the 50S ribosomal subunit.

The protein is Large ribosomal subunit protein bL31B of Streptococcus pneumoniae serotype 2 (strain D39 / NCTC 7466).